Reading from the N-terminus, the 153-residue chain is Ribonuclease H (153 aa).

The region spanning 1–141 is the RNase H type-1 domain; the sequence is MKHIEIYTDG…CDVLARDAAS (141 aa). Residues Asp9, Glu47, Asp69, and Asp133 each coordinate Mg(2+).

The protein belongs to the RNase H family. In terms of assembly, monomer. Mg(2+) serves as cofactor.

The protein localises to the cytoplasm. It carries out the reaction Endonucleolytic cleavage to 5'-phosphomonoester.. Endonuclease that specifically degrades the RNA of RNA-DNA hybrids. The polypeptide is Ribonuclease H (Pseudoalteromonas atlantica (strain T6c / ATCC BAA-1087)).